The primary structure comprises 420 residues: Serine palmitoyltransferase (420 aa).

Pyridoxal 5'-phosphate contacts are provided by residues 134 to 135 (GY), His-234, Thr-262, and Ser-264. The residue at position 265 (Lys-265) is an N6-(pyridoxal phosphate)lysine.

It belongs to the class-II pyridoxal-phosphate-dependent aminotransferase family. As to quaternary structure, homodimer. It depends on pyridoxal 5'-phosphate as a cofactor.

Its subcellular location is the cytoplasm. It carries out the reaction L-serine + hexadecanoyl-CoA + H(+) = 3-oxosphinganine + CO2 + CoA. It functions in the pathway lipid metabolism; sphingolipid metabolism. Not inhibited by relatively high concentrations of palmitoyl-CoA. Inhibited by both D-cycloserine (DCS) and L-cycloserine (LCS), which inactivate SPT by transamination to form a free pyridoxamine 5'-phosphate (PMP) and beta-aminooxyacetaldehyde that remain bound at the active site. Inhibition is reversed by incubation with excess pyridoxal phosphate. Inhibited by the fungal natural product myriocin, which acts as a competitive inhibitor for both L-serine and palmitoyl-CoA substrates. Catalyzes the condensation of L-serine with palmitoyl-CoA (hexadecanoyl-CoA) to produce 3-oxosphinganine. Exhibits a broad substrate specificity concerning the chain length and the degree of unsaturation of acyl-CoA. The sequence is that of Serine palmitoyltransferase from Sphingomonas paucimobilis (Pseudomonas paucimobilis).